We begin with the raw amino-acid sequence, 315 residues long: WD repeat domain-containing protein 83 (315 aa).

7 WD repeats span residues 23 to 62 (CGQG…LLRT), 65 to 104 (GHGY…VVRK), 107 to 146 (GHAG…PEPV), 151 to 188 (EARD…LFSD), 190 to 228 (VGSP…LLGE), 231 to 272 (GHKN…LALA), and 275 to 313 (VGSG…AEDG).

Belongs to the WD repeat MORG1 family. In terms of assembly, interacts with EGLN3/PHD3. Interacts with ERK signaling proteins MAP2K1/MEK1, MAP2K2/MEK2, LAMTOR3, ARAF/Raf-1, MAPK1/ERK2 and MAPK3/ERK1. Identified in the spliceosome C complex. Interacts with PARD6B and CRB3. Interacts strongly with GTP-bound RRAGA but not with inactive GDP-bound. Interacts with p62/SQSTM1.

It is found in the cytoplasm. It localises to the lysosome. Its subcellular location is the nucleus. Molecular scaffold protein for various multimeric protein complexes. Acts as a module in the assembly of a multicomponent scaffold for the ERK pathway, linking ERK responses to specific agonists. At low concentrations it enhances ERK activation, whereas high concentrations lead to the inhibition of ERK activation. Also involved in response to hypoxia by acting as a negative regulator of HIF1A/HIF-1-alpha via its interaction with EGLN3/PHD3. May promote degradation of HIF1A. May act by recruiting signaling complexes to a specific upstream activator. May also be involved in pre-mRNA splicing. Participates in tight junction development by regulating apico-basal polarity, a key step in tissue development and organization. Mechanistically, regulates the translocation of PAR6-aPKC from the cytoplasm to the apical surface by acting as an adapter between PARD6B AND CRB3. Also acts as a negative regulator of mTORC1 under nutrient-rich conditions by binding to the active Rag GTPases to inhibit mTORC1 localization to the lysosome and phosphorylation of downstream targets. This facilitates constitutive basal autophagy during nutrient availability. This is WD repeat domain-containing protein 83 (WDR83) from Homo sapiens (Human).